The sequence spans 857 residues: Protein translocase subunit SecA (857 aa).

Residues Q88, 106-110 (GEGKT), and D496 contribute to the ATP site. C833, C835, C844, and C845 together coordinate Zn(2+).

Belongs to the SecA family. As to quaternary structure, monomer and homodimer. Part of the essential Sec protein translocation apparatus which comprises SecA, SecYEG and auxiliary proteins SecDF-YajC and YidC. The cofactor is Zn(2+).

Its subcellular location is the cell inner membrane. The protein localises to the cytoplasm. The enzyme catalyses ATP + H2O + cellular proteinSide 1 = ADP + phosphate + cellular proteinSide 2.. Part of the Sec protein translocase complex. Interacts with the SecYEG preprotein conducting channel. Has a central role in coupling the hydrolysis of ATP to the transfer of proteins into and across the cell membrane, serving as an ATP-driven molecular motor driving the stepwise translocation of polypeptide chains across the membrane. The chain is Protein translocase subunit SecA from Sulfurimonas denitrificans (strain ATCC 33889 / DSM 1251) (Thiomicrospira denitrificans (strain ATCC 33889 / DSM 1251)).